Here is a 417-residue protein sequence, read N- to C-terminus: Sulfite reductase, dissimilatory-type subunit alpha (417 aa).

The [4Fe-4S] cluster site is built by C170, C176, C214, C218, C264, C284, C287, and C290. C218 lines the siroheme pocket.

The cofactor is [4Fe-4S] cluster. Requires siroheme as cofactor.

It catalyses the reaction [DsrC protein]-trisulfide + NAD(+) + 3 H2O = [DsrC protein]-dithiol + sulfite + NADH + 3 H(+). Functionally, catalyzes the reduction of sulfite to sulfide. This is the terminal oxidation reaction in sulfate respiration. The protein is Sulfite reductase, dissimilatory-type subunit alpha (dsrA) of Allochromatium vinosum (strain ATCC 17899 / DSM 180 / NBRC 103801 / NCIMB 10441 / D) (Chromatium vinosum).